A 596-amino-acid chain; its full sequence is Ubiquilin-4 (596 aa).

In terms of domain architecture, Ubiquitin-like spans 13–87; that stretch reads IRVTVKTPKD…VHLVIKTPQK (75 aa). Glycyl lysine isopeptide (Lys-Gly) (interchain with G-Cter in SUMO2) cross-links involve residues Lys23 and Lys62. The disordered stretch occupies residues 89–148; it reads QDPVTAAASPPSTPDSASAPSTTPASPAAAPVQPCSSGNTTSDAGSGGGPSPVAAEGPSS. 2 stretches are compositionally biased toward low complexity: residues 93–119 and 139–148; these read TAAA…AAAP and SPVAAEGPSS. Ser139 is modified (phosphoserine). STI1 domains follow at residues 187 to 224 and 225 to 256; these read NPEM…QQLM and ERNP…MQEM. Thr282 carries the phosphothreonine modification. The interval 297-361 is disordered; the sequence is GNNPFSSLAG…QVHPTVSNPF (65 aa). The segment covering 302–313 has biased composition (low complexity); sequence SSLAGNSDNSSS. At Ser313 the chain carries Phosphoserine. The segment covering 324–335 has biased composition (pro residues); that stretch reads LPNPWSPSPPTS. The span at 339 to 349 shows a compositional bias: gly residues; the sequence is GSGGEGTGGSG. The span at 352 to 361 shows a compositional bias: polar residues; the sequence is QVHPTVSNPF. STI1 domains are found at residues 388-435 and 439-471; these read NPQL…QEQL and LPVF…QQGL. The disordered stretch occupies residues 482–528; the sequence is VPSLGSFGTPRTSVPLAGSNSGSSAEAPTSSPGVPATSPPSAGSNAQ. Residues 499 to 513 are compositionally biased toward polar residues; it reads GSNSGSSAEAPTSSP. A UBA domain is found at 548-593; that stretch reads PMPEVRFQQQLEQLNSMGFINREANLQALIATGGDINAAIERLLGS.

In terms of assembly, homooligomer. Binds signal sequences of proteins that are targeted to the endoplasmic reticulum. Interacts (via UBA domain) with GJA1 (not ubiquitinated) and with ubiquitin; both compete for the same binding site. Interacts (via UBA domain) with ubiquitin and with polyubiquitin chains. Interacts (via ubiquitin-like domain) with PSMD2 and PSMD4, regulatory subunits of the 26S proteasome. Interacts with ATXN1/SCA1; interaction with ATXN1 inhibits polyubiquitination of UBQLN4 and interferes with PSMD4 binding. Interacts with HERPUD1. Interacts (via ubiquitin-like domain) with UBQLN1 (via UBA domain). Interacts with UBQLN2. Interacts (via STI1 1 and 2 domains) with MAP1LC3A/B/C. Interacts with BAG6. Interacts with MRE11 (when ubiquitinated); interaction with ubiquitinated MRE11 leads to MRE11 removal from chromatin. Interacts with DESI1/POST; leading to nuclear export. Interacts with BCL2A1 and BCL2L10. In terms of processing, phosphorylated by ATM at Ser-313 in response to DNA damage, leading to localization in the nucleus and recruitment to sites of DNA damage. Post-translationally, ubiquitinated; this does not lead to proteasomal degradation. May undergo both 'Lys-48'- and 'Lys-63'-linked polyubiquitination. In terms of tissue distribution, detected in testis, ovary, thyroid, kidney, thymus, heart, liver, lung and spleen (at protein level). Highly expressed in heart, skeletal muscle, kidney, liver and brain. Detected at lower levels in testis, lung and spleen.

It is found in the nucleus. Its subcellular location is the cytoplasm. The protein resides in the chromosome. The protein localises to the endoplasmic reticulum. It localises to the perinuclear region. It is found in the cytoplasmic vesicle. Its subcellular location is the autophagosome. Regulator of protein degradation that mediates the proteasomal targeting of misfolded, mislocalized or accumulated proteins. Acts by binding polyubiquitin chains of target proteins via its UBA domain and by interacting with subunits of the proteasome via its ubiquitin-like domain. Key regulator of DNA repair that represses homologous recombination repair: in response to DNA damage, recruited to sites of DNA damage following phosphorylation by ATM and acts by binding and removing ubiquitinated MRE11 from damaged chromatin, leading to MRE11 degradation by the proteasome. MRE11 degradation prevents homologous recombination repair, redirecting double-strand break repair toward non-homologous end joining (NHEJ). Specifically recognizes and binds mislocalized transmembrane-containing proteins and targets them to proteasomal degradation. Collaborates with DESI1/POST in the export of ubiquitinated proteins from the nucleus to the cytoplasm. Plays a role in the regulation of the proteasomal degradation of non-ubiquitinated GJA1. Acts as an adapter protein that recruits UBQLN1 to the autophagy machinery. Mediates the association of UBQLN1 with autophagosomes and the autophagy-related protein LC3 (MAP1LC3A/B/C) and may assist in the maturation of autophagosomes to autolysosomes by mediating autophagosome-lysosome fusion. The polypeptide is Ubiquilin-4 (Mus musculus (Mouse)).